A 136-amino-acid polypeptide reads, in one-letter code: MTDPIATSSTAAKELLDMDGRASEQRLIQLRIRQQQERAVKELRDAIGIHQCKKGIFCLVKQSKISYEITATDHRLSYELGPQRQKFTCMVGINPIVITQQSGDTKGCIQCSCDSTECIYTLLKTLCGLRDLLPMN.

The protein belongs to the adenoviridae E3_15 family.

Functionally, protects virus-infected cells from TNF-induced cytolysis. This is Early E3 15.3 kDa protein from Human adenovirus B serotype 3 (HAdV-3).